Here is a 126-residue protein sequence, read N- to C-terminus: uncharacterized protein (126 aa).

Disordered regions lie at residues 15–72 (PEWG…SDPQ) and 93–126 (TQIPEASDSQAAQKPQAHRQIPETTEAGRETTSN). Composition is skewed to basic and acidic residues over residues 29–46 (DPLDRRLQNLRDRERVPE) and 55–64 (VQEDSREHGQ).

This is an uncharacterized protein from Homo sapiens (Human).